The chain runs to 177 residues: 2-C-methyl-D-erythritol 2,4-cyclodiphosphate synthase (177 aa).

2 residues coordinate a divalent metal cation: Asp-23 and His-25. 4-CDP-2-C-methyl-D-erythritol 2-phosphate contacts are provided by residues 23–25 (DVH) and 49–50 (HS). An a divalent metal cation-binding site is contributed by His-57. Residues 71 to 73 (DIG), 76 to 80 (FSDTD), 115 to 121 (AQAPRMA), and Arg-157 each bind 4-CDP-2-C-methyl-D-erythritol 2-phosphate.

It belongs to the IspF family. As to quaternary structure, homotrimer. Requires a divalent metal cation as cofactor.

It catalyses the reaction 4-CDP-2-C-methyl-D-erythritol 2-phosphate = 2-C-methyl-D-erythritol 2,4-cyclic diphosphate + CMP. Its pathway is isoprenoid biosynthesis; isopentenyl diphosphate biosynthesis via DXP pathway; isopentenyl diphosphate from 1-deoxy-D-xylulose 5-phosphate: step 4/6. In terms of biological role, involved in the biosynthesis of isopentenyl diphosphate (IPP) and dimethylallyl diphosphate (DMAPP), two major building blocks of isoprenoid compounds. Catalyzes the conversion of 4-diphosphocytidyl-2-C-methyl-D-erythritol 2-phosphate (CDP-ME2P) to 2-C-methyl-D-erythritol 2,4-cyclodiphosphate (ME-CPP) with a corresponding release of cytidine 5-monophosphate (CMP). This Nitrosospira multiformis (strain ATCC 25196 / NCIMB 11849 / C 71) protein is 2-C-methyl-D-erythritol 2,4-cyclodiphosphate synthase.